The following is a 948-amino-acid chain: Putative JmjC domain-containing histone demethylation protein 1 (948 aa).

Positions 243–402 (VSTTKLAYYV…PQLSIYNLEL (160 aa)) constitute a JmjC domain. Residue T294 coordinates substrate. The Fe cation site is built by H297 and E299. K314 contributes to the substrate binding site.

It belongs to the JHDM1 histone demethylase family. Fe(2+) serves as cofactor.

It localises to the nucleus. The enzyme catalyses N(6),N(6)-dimethyl-L-lysyl(36)-[histone H3] + 2 2-oxoglutarate + 2 O2 = L-lysyl(36)-[histone H3] + 2 formaldehyde + 2 succinate + 2 CO2. Functionally, may be a histone demethylase that specifically demethylates 'Lys-36' of histone H3, thereby playing a central role in histone code. Represses transcriptional silencing by negatively affecting heterochromatin stability. This is Putative JmjC domain-containing histone demethylation protein 1 (jhd1) from Schizosaccharomyces pombe (strain 972 / ATCC 24843) (Fission yeast).